The primary structure comprises 215 residues: 3,4-dihydroxy-2-butanone 4-phosphate synthase (215 aa).

Residues 37-38 (RE), Asp-42, 150-154 (RPGHT), and Glu-174 each bind D-ribulose 5-phosphate. Residue Glu-38 participates in Mg(2+) binding. His-153 contacts Mg(2+).

This sequence belongs to the DHBP synthase family. As to quaternary structure, homodimer. The cofactor is Mg(2+). Mn(2+) is required as a cofactor.

The enzyme catalyses D-ribulose 5-phosphate = (2S)-2-hydroxy-3-oxobutyl phosphate + formate + H(+). It functions in the pathway cofactor biosynthesis; riboflavin biosynthesis; 2-hydroxy-3-oxobutyl phosphate from D-ribulose 5-phosphate: step 1/1. Catalyzes the conversion of D-ribulose 5-phosphate to formate and 3,4-dihydroxy-2-butanone 4-phosphate. In Buchnera aphidicola subsp. Acyrthosiphon pisum (strain 5A), this protein is 3,4-dihydroxy-2-butanone 4-phosphate synthase.